The following is a 69-amino-acid chain: MDAIDSVVDPLRDFAKDSIRLVKRCHKPDRKEFTKVAVRTAIGFVVMGFVGFFVKLIFIPINNIIVGAT.

Residue Met1 is modified to N-acetylmethionine. The Cytoplasmic segment spans residues 1–32 (MDAIDSVVDPLRDFAKDSIRLVKRCHKPDRKE). A helical transmembrane segment spans residues 33 to 61 (FTKVAVRTAIGFVVMGFVGFFVKLIFIPI). Residues 62-69 (NNIIVGAT) lie on the Extracellular side of the membrane.

Belongs to the SecE/SEC61-gamma family. As to quaternary structure, heterotrimeric complex composed of SEC61-alpha, SEC61-beta and SEC61-gamma.

Its subcellular location is the endoplasmic reticulum membrane. In terms of biological role, necessary for protein translocation in the endoplasmic reticulum. The protein is Protein transport protein Sec61 subunit gamma-1 (SEC61G1) of Arabidopsis thaliana (Mouse-ear cress).